We begin with the raw amino-acid sequence, 139 residues long: Putative nickel-responsive regulator (139 aa).

4 residues coordinate Ni(2+): H79, H90, H92, and C98.

It belongs to the transcriptional regulatory CopG/NikR family. It depends on Ni(2+) as a cofactor.

Functionally, transcriptional regulator. The sequence is that of Putative nickel-responsive regulator from Trichlorobacter lovleyi (strain ATCC BAA-1151 / DSM 17278 / SZ) (Geobacter lovleyi).